The primary structure comprises 72 residues: Protein RALF-like 11 (72 aa).

An N-terminal signal peptide occupies residues 1–17; it reads MKAWLICLLVICAAVIA. Intrachain disulfides connect C34–C43 and C63–C69.

The protein belongs to the plant rapid alkalinization factor (RALF) family.

The protein localises to the secreted. In terms of biological role, cell signaling peptide that may regulate plant stress, growth, and development. Mediates a rapid alkalinization of extracellular space by mediating a transient increase in the cytoplasmic Ca(2+) concentration leading to a calcium-dependent signaling events through a cell surface receptor and a concomitant activation of some intracellular mitogen-activated protein kinases. In Arabidopsis thaliana (Mouse-ear cress), this protein is Protein RALF-like 11 (RALFL11).